A 323-amino-acid chain; its full sequence is Mitochondrial glutamate carrier 1 (323 aa).

Solcar repeat units follow at residues 6–93, 101–214, and 223–312; these read ISLP…FRHQ, LTLP…LNQL, and SPFY…GIAE. The next 6 helical transmembrane spans lie at 12–32, 62–82, 107–127, 189–209, 223–243, and 292–312; these read LING…IDLA, YFGM…EKAI, MLAG…MEML, GLGA…PLFA, SPFY…AVAV, and ALVI…GIAE.

Belongs to the mitochondrial carrier (TC 2.A.29) family. Detected in insulin-secreting beta-cells and pancreatic islets (at the protein level).

The protein resides in the mitochondrion inner membrane. The enzyme catalyses L-glutamate(in) + H(+)(in) = L-glutamate(out) + H(+)(out). In terms of biological role, mitochondrial glutamate/H(+) symporter. Responsible for the transport of glutamate from the cytosol into the mitochondrial matrix with the concomitant import of a proton. Plays a role in the control of glucose-stimulated insulin secretion. The polypeptide is Mitochondrial glutamate carrier 1 (Rattus norvegicus (Rat)).